Here is a 95-residue protein sequence, read N- to C-terminus: UPF0235 protein PTH_1821 (95 aa).

The protein belongs to the UPF0235 family.

This is UPF0235 protein PTH_1821 from Pelotomaculum thermopropionicum (strain DSM 13744 / JCM 10971 / SI).